Consider the following 446-residue polypeptide: UPF0597 protein DvMF_1488 (446 aa).

The protein belongs to the UPF0597 family.

The chain is UPF0597 protein DvMF_1488 from Nitratidesulfovibrio vulgaris (strain DSM 19637 / Miyazaki F) (Desulfovibrio vulgaris).